We begin with the raw amino-acid sequence, 283 residues long: 4-diphosphocytidyl-2-C-methyl-D-erythritol kinase (283 aa).

Lys-10 is a catalytic residue. Residue 99–109 (PMGGGLGGGSS) participates in ATP binding. Asp-141 is an active-site residue.

Belongs to the GHMP kinase family. IspE subfamily. Homodimer.

It catalyses the reaction 4-CDP-2-C-methyl-D-erythritol + ATP = 4-CDP-2-C-methyl-D-erythritol 2-phosphate + ADP + H(+). It participates in isoprenoid biosynthesis; isopentenyl diphosphate biosynthesis via DXP pathway; isopentenyl diphosphate from 1-deoxy-D-xylulose 5-phosphate: step 3/6. Its function is as follows. Catalyzes the phosphorylation of the position 2 hydroxy group of 4-diphosphocytidyl-2C-methyl-D-erythritol. The sequence is that of 4-diphosphocytidyl-2-C-methyl-D-erythritol kinase from Salmonella arizonae (strain ATCC BAA-731 / CDC346-86 / RSK2980).